The primary structure comprises 311 residues: Serine/threonine-protein phosphatase PP1-1 (311 aa).

Positions 53, 55, 82, and 114 each coordinate Mn(2+). Residue histidine 115 is the Proton donor of the active site. Mn(2+) is bound by residues histidine 164 and histidine 238.

It belongs to the PPP phosphatase family. PP-6 (PP-V) subfamily. As to quaternary structure, inactivated in a complex with phosphatase methylesterase PPE1 (PP2Ai). Interacts with phosphatase 2A activator RRD1, which can reactivate PP2Ai by dissociating the catalytic subunit from the complex. Forms a ternary complex with RRD1-TAP42. The cofactor is Mn(2+).

It localises to the cytoplasm. The catalysed reaction is O-phospho-L-seryl-[protein] + H2O = L-seryl-[protein] + phosphate. The enzyme catalyses O-phospho-L-threonyl-[protein] + H2O = L-threonyl-[protein] + phosphate. In terms of biological role, involved in the dephosphorylation of the large subunit of RNA polymerase II. Is required in late G1 for normal G1 cyclin expression, bud initiation and expression of certain genes that are periodically expressed during late G1. Associates with the SAP proteins in a cell cycle-dependent manner. The chain is Serine/threonine-protein phosphatase PP1-1 (SIT4) from Saccharomyces cerevisiae (strain ATCC 204508 / S288c) (Baker's yeast).